We begin with the raw amino-acid sequence, 123 residues long: Small ribosomal subunit protein uS12 (123 aa).

Aspartate 89 is modified (3-methylthioaspartic acid).

The protein belongs to the universal ribosomal protein uS12 family. As to quaternary structure, part of the 30S ribosomal subunit. Contacts proteins S8 and S17. May interact with IF1 in the 30S initiation complex.

Functionally, with S4 and S5 plays an important role in translational accuracy. Interacts with and stabilizes bases of the 16S rRNA that are involved in tRNA selection in the A site and with the mRNA backbone. Located at the interface of the 30S and 50S subunits, it traverses the body of the 30S subunit contacting proteins on the other side and probably holding the rRNA structure together. The combined cluster of proteins S8, S12 and S17 appears to hold together the shoulder and platform of the 30S subunit. The sequence is that of Small ribosomal subunit protein uS12 from Methylobacterium radiotolerans (strain ATCC 27329 / DSM 1819 / JCM 2831 / NBRC 15690 / NCIMB 10815 / 0-1).